The primary structure comprises 719 residues: Solute carrier organic anion transporter family member 6A1 (719 aa).

Residues 1–46 (MFVGVARHSGSQDEVSRGVEPLEAARAQPAKDRRAKGTPKSSKPGK) form a disordered region. Residues 1-106 (MFVGVARHSG…TCCECCNNIR (106 aa)) lie on the Cytoplasmic side of the membrane. The span at 33–46 (RRAKGTPKSSKPGK) shows a compositional bias: basic residues. Residues 107–126 (CFMIFYCILLICQGVVFGLI) form a helical membrane-spanning segment. Residues 127–145 (DVSIGDFQKEYQLKTIEKL) are Extracellular-facing. Residues 146–166 (ALEKSYDISSGLVAIFIAFYG) traverse the membrane as a helical segment. Topologically, residues 167-171 (DRKKV) are cytoplasmic. Residues 172 to 196 (IWFVASSFLIGLGSLLCAFPSINEE) form a helical membrane-spanning segment. Over 197–223 (NKQSKVGIEDICEEIKVVSGCQSSGIS) the chain is Extracellular. The chain crosses the membrane as a helical span at residues 224–254 (FQSKYLSFFILGQTVQGIAGMPLYILGITFI). Residues 255-274 (DENVATHSAGIYLGIAECTS) lie on the Cytoplasmic side of the membrane. The helical transmembrane segment at 275 to 295 (MIGYALGYVLGAPLVKVPENT) threads the bilayer. Topologically, residues 296–311 (TSATNTTVNNGSPEWL) are extracellular. Residue N300 is glycosylated (N-linked (GlcNAc...) asparagine). A helical membrane pass occupies residues 312–336 (WTWWINFLFAAVVAWCTLIPLSCFP). Topologically, residues 337–378 (NNMPGSTRIKARKRKQLHFFDSRLKDLKLGTNIKDLCAALWI) are cytoplasmic. A helical membrane pass occupies residues 379 to 400 (LMKNPVLICLALSKATEYLVII). Over 401 to 420 (GASEFLPIYLENQFILTPTV) the chain is Extracellular. The helical transmembrane segment at 421–444 (ATTLAGLVLIPGGALGQLLGGVIV) threads the bilayer. Residues 445 to 448 (STLE) lie on the Cytoplasmic side of the membrane. Residues 449 to 472 (MSCKALMRFIMVTSVISLILLVFI) form a helical membrane-spanning segment. Residues 473 to 581 (IFVRCNPVQF…DAKCYKLPLF (109 aa)) lie on the Extracellular side of the membrane. The Kazal-like domain maps to 496–551 (GNLTAPCNEKCRCSSSIYSSICGRDDIEYFSPCFAGCTYSKAQNQKKMYYNCSCIK). N497 is a glycosylation site (N-linked (GlcNAc...) asparagine). Cystine bridges form between C502–C532, C508–C528, and C517–C549. An N-linked (GlcNAc...) asparagine glycan is attached at N546. A helical membrane pass occupies residues 582–604 (IAFIFSTLIFSGFSGVPIVLAMT). At 605 to 613 (RVVPDKLRS) the chain is on the cytoplasmic side. Residues 614–639 (LALGVSYVILRIFGTIPGPSIFKMSG) traverse the membrane as a helical segment. Over 640–673 (ETSCILRDVNKCGHTGRCWIYNKTKMAFLLVGIC) the chain is Extracellular. N661 carries N-linked (GlcNAc...) asparagine glycosylation. Residues 674–691 (FLCKLCTIIFTTIAFFIY) traverse the membrane as a helical segment. The Cytoplasmic segment spans residues 692–719 (KRRLNENTDFPDVTVKNPKVKKKEETDL).

It belongs to the organo anion transporter (TC 2.A.60) family. As to expression, strongly expressed in testis. Weakly expressed in spleen, brain, fetal brain and placenta. Detected in lung tumors.

It is found in the cell membrane. The protein is Solute carrier organic anion transporter family member 6A1 (SLCO6A1) of Homo sapiens (Human).